Here is a 303-residue protein sequence, read N- to C-terminus: tRNA pseudouridine synthase B (303 aa).

Asp-47 serves as the catalytic Nucleophile.

The protein belongs to the pseudouridine synthase TruB family. Type 1 subfamily.

It carries out the reaction uridine(55) in tRNA = pseudouridine(55) in tRNA. In terms of biological role, responsible for synthesis of pseudouridine from uracil-55 in the psi GC loop of transfer RNAs. The polypeptide is tRNA pseudouridine synthase B (Legionella pneumophila (strain Paris)).